We begin with the raw amino-acid sequence, 492 residues long: Glutamyl-tRNA(Gln) amidotransferase subunit A (492 aa).

Active-site charge relay system residues include lysine 78 and serine 158. Residue serine 182 is the Acyl-ester intermediate of the active site.

The protein belongs to the amidase family. GatA subfamily. Heterotrimer of A, B and C subunits.

It catalyses the reaction L-glutamyl-tRNA(Gln) + L-glutamine + ATP + H2O = L-glutaminyl-tRNA(Gln) + L-glutamate + ADP + phosphate + H(+). In terms of biological role, allows the formation of correctly charged Gln-tRNA(Gln) through the transamidation of misacylated Glu-tRNA(Gln) in organisms which lack glutaminyl-tRNA synthetase. The reaction takes place in the presence of glutamine and ATP through an activated gamma-phospho-Glu-tRNA(Gln). The protein is Glutamyl-tRNA(Gln) amidotransferase subunit A of Parvibaculum lavamentivorans (strain DS-1 / DSM 13023 / NCIMB 13966).